We begin with the raw amino-acid sequence, 348 residues long: Dihydroorotase (348 aa).

His-14 and His-16 together coordinate Zn(2+). Substrate contacts are provided by residues His-16–Arg-18 and Asn-42. Zn(2+)-binding residues include Lys-100, His-137, and His-175. N6-carboxylysine is present on Lys-100. Residue His-137 coordinates substrate. Leu-220 provides a ligand contact to substrate. Asp-248 is a binding site for Zn(2+). The active site involves Asp-248. Residues His-252 and Ala-264 each contribute to the substrate site.

The protein belongs to the metallo-dependent hydrolases superfamily. DHOase family. Class II DHOase subfamily. Homodimer. Requires Zn(2+) as cofactor.

It catalyses the reaction (S)-dihydroorotate + H2O = N-carbamoyl-L-aspartate + H(+). It functions in the pathway pyrimidine metabolism; UMP biosynthesis via de novo pathway; (S)-dihydroorotate from bicarbonate: step 3/3. Its function is as follows. Catalyzes the reversible cyclization of carbamoyl aspartate to dihydroorotate. This Pseudomonas putida (strain ATCC 47054 / DSM 6125 / CFBP 8728 / NCIMB 11950 / KT2440) protein is Dihydroorotase.